Reading from the N-terminus, the 926-residue chain is Storkhead-box protein 2 (926 aa).

6 disordered regions span residues 1–32 (MKKTRSTTLRRAWPSSDFSDRASDRMRSRSEK), 338–394 (EEEK…IPGG), 452–529 (EMPF…SYVD), 632–693 (GVKK…SLDK), 724–803 (LKSH…GTMQ), and 825–926 (LAPK…VTSV). Residues 18–32 (FSDRASDRMRSRSEK) show a composition bias toward basic and acidic residues. Over residues 353-378 (HSGRSKKSRTHRKSHGKSRSHSKTRV) the composition is skewed to basic residues. Residues 379–394 (SKGDPSDGSHLDIPGG) are compositionally biased toward basic and acidic residues. Positions 463 to 472 (SHSKVHRSHS) are enriched in basic residues. Positions 473–495 (HTQDRRSRNERSNKAKERSRSMD) are enriched in basic and acidic residues. Polar residues predominate over residues 518–529 (QDDQTPSQSYVD). Composition is skewed to basic and acidic residues over residues 632 to 658 (GVKKLSPSDRQVPHSSREPVGHKEESP) and 684 to 693 (HGAEPSSLDK). The segment covering 746-772 (LGTSAAQATPASQRQQESGGNQETSFD) has biased composition (polar residues). The segment covering 785–799 (GANKNTEEEKNREDV) has biased composition (basic and acidic residues). Polar residues-rich tracts occupy residues 847–884 (MDSSSITVDSGFNSPRTRESLASNTSSIVESNRRQNPA) and 914–926 (KPSNCLQASVTSV).

This Macaca fascicularis (Crab-eating macaque) protein is Storkhead-box protein 2 (STOX2).